Here is a 34-residue protein sequence, read N- to C-terminus: Photosystem II reaction center protein M (34 aa).

Residues 5–25 (ILGLTATALFIIIPTSFLLIL) traverse the membrane as a helical segment.

The protein belongs to the PsbM family. As to quaternary structure, PSII is composed of 1 copy each of membrane proteins PsbA, PsbB, PsbC, PsbD, PsbE, PsbF, PsbH, PsbI, PsbJ, PsbK, PsbL, PsbM, PsbT, PsbX, PsbY, PsbZ, Psb30/Ycf12, at least 3 peripheral proteins of the oxygen-evolving complex and a large number of cofactors. It forms dimeric complexes.

The protein localises to the plastid. The protein resides in the chloroplast thylakoid membrane. Its function is as follows. One of the components of the core complex of photosystem II (PSII). PSII is a light-driven water:plastoquinone oxidoreductase that uses light energy to abstract electrons from H(2)O, generating O(2) and a proton gradient subsequently used for ATP formation. It consists of a core antenna complex that captures photons, and an electron transfer chain that converts photonic excitation into a charge separation. This subunit is found at the monomer-monomer interface. This Stigeoclonium helveticum (Green alga) protein is Photosystem II reaction center protein M.